The chain runs to 413 residues: Aspartate aminotransferase, cytoplasmic (413 aa).

Gly-39 and Trp-141 together coordinate L-aspartate. Residue Ser-149 is modified to Phosphoserine. Asn-195 provides a ligand contact to L-aspartate. Lys-259 carries the post-translational modification N6-(pyridoxal phosphate)lysine. Arg-387 contacts L-aspartate.

The protein belongs to the class-I pyridoxal-phosphate-dependent aminotransferase family. In terms of assembly, homodimer. The cofactor is pyridoxal 5'-phosphate.

The protein localises to the cytoplasm. It carries out the reaction L-aspartate + 2-oxoglutarate = oxaloacetate + L-glutamate. It catalyses the reaction L-cysteine + 2-oxoglutarate = 2-oxo-3-sulfanylpropanoate + L-glutamate. The catalysed reaction is (2S)-2-aminobutanoate + 2-oxoglutarate = 2-oxobutanoate + L-glutamate. The enzyme catalyses 3-sulfino-L-alanine + 2-oxoglutarate = 3-sulfinopyruvate + L-glutamate. In terms of biological role, biosynthesis of L-glutamate from L-aspartate or L-cysteine. Important regulator of levels of glutamate, the major excitatory neurotransmitter of the vertebrate central nervous system. Acts as a scavenger of glutamate in brain neuroprotection. The aspartate aminotransferase activity is involved in hepatic glucose synthesis during development and in adipocyte glyceroneogenesis. Using L-cysteine as substrate, regulates levels of mercaptopyruvate, an important source of hydrogen sulfide. Mercaptopyruvate is converted into H(2)S via the action of 3-mercaptopyruvate sulfurtransferase (3MST). Hydrogen sulfide is an important synaptic modulator and neuroprotectant in the brain. This chain is Aspartate aminotransferase, cytoplasmic, found in Pan troglodytes (Chimpanzee).